We begin with the raw amino-acid sequence, 603 residues long: UvrABC system protein C (603 aa).

In terms of domain architecture, GIY-YIG spans 15–92; sequence DQPGCYLMKD…IKKHDPRFNI (78 aa). The 36-residue stretch at 197–232 folds into the UVR domain; the sequence is KTVKNDLMKKMQEAAENMEFEKAGEFRDQINAIETT.

This sequence belongs to the UvrC family. As to quaternary structure, interacts with UvrB in an incision complex.

The protein resides in the cytoplasm. The UvrABC repair system catalyzes the recognition and processing of DNA lesions. UvrC both incises the 5' and 3' sides of the lesion. The N-terminal half is responsible for the 3' incision and the C-terminal half is responsible for the 5' incision. The chain is UvrABC system protein C from Listeria monocytogenes serotype 4a (strain HCC23).